The following is a 261-amino-acid chain: Thioesterase TesA (261 aa).

Residues serine 104, aspartate 208, and histidine 236 contribute to the active site.

This sequence belongs to the thioesterase family.

It carries out the reaction a fatty acyl-CoA + H2O = a fatty acid + CoA + H(+). Functionally, involved in the synthesis of both phthiocerol dimycocerosates (PDIMs) and phenolic glycolipids (PGLs), which are structurally related lipids non-covalently bound to the outer cell wall layer of M.tuberculosis and are important virulence factors. This chain is Thioesterase TesA (tesA), found in Mycobacterium leprae (strain TN).